A 1233-amino-acid polypeptide reads, in one-letter code: MNTIPSSNYLSSCPNCGRVISAERLYKGSVCSECLEEDREFNSIRELVNELSRLNKLNRLNYIKEVLREYDIFVELFKRIIGFPPFGPQKSWIIRVLRKESFAIIAPPGLGKTTFGIITSLYFSSKNFRSILIFPTRSLVKQAVDRISMYSNKTNIETKLLYYHSGINESQKQELYKALNAGDFNIFIATNRFFIDKINELKNIKYDFMFVDDVDTALKSSKSAETILNLAGFSKDDILSVKELLRKSREDESVYTKIQEIRGNKLKGKTIVFSSATLTRGNPVLSALMGFRPGSSVIYLRKIIDTYAYLPNNDDDVVNLLKELLNKLGEGGLIFVPVDKGQEYAKFLEAKLSDSFNVVTITSSNTNKIEDFANGNIYALIGSATHYGILVRGIDIPWRVKYAIFVGIPKFKFKIGEVMNLVALSRILSMIGLITKDQDIVRLAGRVRGKLRKLSPAAISMLTNQAREGKLEDETLLRAYEVVNKYLEDKDILKKIAELGDLVISNGYILMPDYLTYIQASGRTSRIYGGELTTGLSVLLIDDINLFNILNRKLSLILDEIIWQELQIKKNKIGSSDLTEIINKINEERERILKVKKEGEIEPSLQKVKTVLFIVESPNKAKTISNFFAKPSIRQLENIRAFETVLEDKILIVAATGGHVYDLTTQNIGIYGVEVQQQNSHFNFIPYYNTIKKCINGHQFTDFEQGNQCPKCHTTQIILDKTATIDALRKLALEADEILIGTDPDTEGEKIAWDIYLALKPFNSNIKRAEFHEVTRKAILQAINNPRPFNVNLVKSQIVRRIEDRWIGFKLSTKLQEDFWKEYCKNYNCKSEENKNLSAGRVQSPVLNWIVNRYDEYNANKTKIYYGSIKGIDELKFYVFKQNEKIRKNANIYVKIINTKVLEEEINPLPPYTTDTLLYDANQFYGISASETMKIAQDLFELGLITYHRTDSTRISNTGISIAEGYLKQIAGENYTKIFKPRSWGEGGAHEAIRPTRPLDVDQLRLLVDEGEIELAKKITRAHFLIYDLIFRRFITSQLVPLKVIKERIEYKICEDSNCNSELKTLQNYSEFITDIKLPIQLDYSKFLYLPTTRIIKNSIIKKLQETTGSTNAELVSKIQLTGSFVKSTVNLYTQAELVAEMKRKEIGRPSTYATIISTILKRGYVIESKKTKKLIPTQLGKEVNKYLNQKFSSFVSEERTRNLLQLMDMVEQGKQDYIQILKDIYYEIKSIR.

The segment at 1–41 (MNTIPSSNYLSSCPNCGRVISAERLYKGSVCSECLEEDREF) adopts an RG N-terminal-type zinc-finger fold. Cys-13, Cys-16, Cys-31, and Cys-34 together coordinate Zn(2+). Residues Gln-89 and 106–113 (APPGLGKT) contribute to the ATP site. One can recognise a Helicase ATP-binding domain in the interval 93–296 (IIRVLRKESF…ALMGFRPGSS (204 aa)). A DEAD box motif is present at residues 212-215 (DDVD). The topoisomerase I stretch occupies residues 606–1233 (QKVKTVLFIV…DIYYEIKSIR (628 aa)). In terms of domain architecture, Toprim spans 610–774 (TVLFIVESPN…NIKRAEFHEV (165 aa)). Glu-616 provides a ligand contact to Mg(2+). The segment at 691–720 (IKKCINGHQFTDFEQGNQCPKCHTTQIILD) adopts an RG C-terminal-type; atypical zinc-finger fold. Positions 694, 698, 709, and 712 each coordinate Zn(2+). Asp-743 is a Mg(2+) binding site. In terms of domain architecture, Topo IA-type catalytic spans 790 to 1233 (NVNLVKSQIV…DIYYEIKSIR (444 aa)). Tyr-947 serves as the catalytic O-(5'-phospho-DNA)-tyrosine intermediate.

It in the N-terminal section; belongs to the DEAD box helicase family. DDVD subfamily. The protein in the C-terminal section; belongs to the type IA topoisomerase family. In terms of assembly, monomer. Requires Zn(2+) as cofactor. The cofactor is Mg(2+).

The protein localises to the cytoplasm. The enzyme catalyses ATP + H2O = ADP + phosphate + H(+). Its function is as follows. Modifies the topological state of DNA by introducing positive supercoils in an ATP-dependent process, increasing the linking number in steps of +1. Binds to single-stranded DNA, transiently cleaves and then rejoins the ends, introducing a positive supercoil in the process. The scissile phosphodiester is attacked by the catalytic tyrosine of the enzyme, resulting in the formation of a DNA-(5'-phosphotyrosyl)-enzyme intermediate. Probably involved in rewinding DNA strands in regions of the chromosome that have opened up to allow replication, transcription, DNA repair and/or for DNA protection. This chain is Reverse gyrase 2, found in Sulfurisphaera tokodaii (strain DSM 16993 / JCM 10545 / NBRC 100140 / 7) (Sulfolobus tokodaii).